A 291-amino-acid polypeptide reads, in one-letter code: DNA repair protein RecO (291 aa).

The protein belongs to the RecO family.

Involved in DNA repair and RecF pathway recombination. This is DNA repair protein RecO from Cupriavidus pinatubonensis (strain JMP 134 / LMG 1197) (Cupriavidus necator (strain JMP 134)).